A 120-amino-acid chain; its full sequence is UPF0102 protein HSM_1206 (120 aa).

The protein belongs to the UPF0102 family.

The protein is UPF0102 protein HSM_1206 of Histophilus somni (strain 2336) (Haemophilus somnus).